The primary structure comprises 427 residues: Histidinol dehydrogenase (427 aa).

Residues Y123, Q185, and N208 each contribute to the NAD(+) site. The substrate site is built by S231, Q253, and H256. Q253 and H256 together coordinate Zn(2+). Catalysis depends on proton acceptor residues E321 and H322. Residues H322, D355, E409, and H414 each contribute to the substrate site. D355 contacts Zn(2+). H414 is a binding site for Zn(2+).

The protein belongs to the histidinol dehydrogenase family. It depends on Zn(2+) as a cofactor.

It carries out the reaction L-histidinol + 2 NAD(+) + H2O = L-histidine + 2 NADH + 3 H(+). It participates in amino-acid biosynthesis; L-histidine biosynthesis; L-histidine from 5-phospho-alpha-D-ribose 1-diphosphate: step 9/9. In terms of biological role, catalyzes the sequential NAD-dependent oxidations of L-histidinol to L-histidinaldehyde and then to L-histidine. The polypeptide is Histidinol dehydrogenase (hisD) (Bacillus subtilis (strain 168)).